A 390-amino-acid chain; its full sequence is Elongation factor Ts, mitochondrial (390 aa).

It belongs to the EF-Ts family.

Its subcellular location is the mitochondrion. Associates with the EF-Tu.GDP complex and induces the exchange of GDP to GTP. It remains bound to the aminoacyl-tRNA.EF-Tu.GTP complex up to the GTP hydrolysis stage on the ribosome. In Plasmodium falciparum (isolate 3D7), this protein is Elongation factor Ts, mitochondrial.